Reading from the N-terminus, the 238-residue chain is 7-cyano-7-deazaguanine synthase 1 (238 aa).

Position 14–24 (14–24 (FSGGQDSATCL)) interacts with ATP. Zn(2+) contacts are provided by cysteine 202, cysteine 217, cysteine 220, and cysteine 223.

This sequence belongs to the QueC family. Zn(2+) serves as cofactor.

The enzyme catalyses 7-carboxy-7-deazaguanine + NH4(+) + ATP = 7-cyano-7-deazaguanine + ADP + phosphate + H2O + H(+). It functions in the pathway purine metabolism; 7-cyano-7-deazaguanine biosynthesis. Its function is as follows. Catalyzes the ATP-dependent conversion of 7-carboxy-7-deazaguanine (CDG) to 7-cyano-7-deazaguanine (preQ(0)). The sequence is that of 7-cyano-7-deazaguanine synthase 1 from Rhodopseudomonas palustris (strain HaA2).